The following is a 1117-amino-acid chain: DNA polymerase (1117 aa).

Residues 591–621 (ESSPVASFEEDSEQTSDSSLGEVSSQGSSDG) form a disordered region. A compositionally biased stretch (low complexity) spans 606 to 618 (SDSSLGEVSSQGS).

This sequence belongs to the DNA polymerase type-B family.

The protein resides in the host nucleus. The catalysed reaction is DNA(n) + a 2'-deoxyribonucleoside 5'-triphosphate = DNA(n+1) + diphosphate. This chain is DNA polymerase, found in Cavia porcellus (Guinea pig).